Here is a 434-residue protein sequence, read N- to C-terminus: GTPase Obg (434 aa).

In terms of domain architecture, Obg spans 1-158; it reads MFIDRAKIYV…RWLYLELKLL (158 aa). One can recognise an OBG-type G domain in the interval 159–328; the sequence is ADVGLLGLPN…LLELMEKYVK (170 aa). GTP-binding positions include 165–172, 190–194, 211–214, 280–283, and 309–311; these read GLPNAGKS, FTTKT, DIPG, NKID, and SAK. Residues S172 and T192 each contribute to the Mg(2+) site. Residues 347–425 form the OCT domain; sequence KQENKKQEIP…IGNYVFKYNS (79 aa).

It belongs to the TRAFAC class OBG-HflX-like GTPase superfamily. OBG GTPase family. Monomer. It depends on Mg(2+) as a cofactor.

It localises to the cytoplasm. An essential GTPase which binds GTP, GDP and possibly (p)ppGpp with moderate affinity, with high nucleotide exchange rates and a fairly low GTP hydrolysis rate. Plays a role in control of the cell cycle, stress response, ribosome biogenesis and in those bacteria that undergo differentiation, in morphogenesis control. The polypeptide is GTPase Obg (Dictyoglomus turgidum (strain DSM 6724 / Z-1310)).